A 242-amino-acid chain; its full sequence is Immunity protein TsiV2 (242 aa).

Transmembrane regions (helical) follow at residues 39–59 (VFGA…FADI), 66–86 (FWGF…LFMP), and 118–138 (FAWV…PLAF).

The protein resides in the host membrane. Its function is as follows. Immunity protein that plays a role in preventing early activation of toxin VasX. This Vibrio cholerae serotype O1 (strain ATCC 39315 / El Tor Inaba N16961) protein is Immunity protein TsiV2.